A 414-amino-acid polypeptide reads, in one-letter code: 5-aminolevulinate synthase (414 aa).

Residues R22, S133, and K152 each coordinate substrate. Residues S185, H213, and T241 each coordinate pyridoxal 5'-phosphate. K244 is an active-site residue. K244 is subject to N6-(pyridoxal phosphate)lysine. Pyridoxal 5'-phosphate is bound by residues T273 and T274. T359 lines the substrate pocket.

This sequence belongs to the class-II pyridoxal-phosphate-dependent aminotransferase family. As to quaternary structure, homodimer. Requires pyridoxal 5'-phosphate as cofactor.

It catalyses the reaction succinyl-CoA + glycine + H(+) = 5-aminolevulinate + CO2 + CoA. The protein operates within porphyrin-containing compound metabolism; protoporphyrin-IX biosynthesis; 5-aminolevulinate from glycine: step 1/1. This Rickettsia conorii (strain ATCC VR-613 / Malish 7) protein is 5-aminolevulinate synthase (hemA).